Here is a 337-residue protein sequence, read N- to C-terminus: Methionyl-tRNA formyltransferase (337 aa).

Position 116 to 119 (116 to 119) interacts with (6S)-5,6,7,8-tetrahydrofolate; that stretch reads SILP.

This sequence belongs to the Fmt family.

It catalyses the reaction L-methionyl-tRNA(fMet) + (6R)-10-formyltetrahydrofolate = N-formyl-L-methionyl-tRNA(fMet) + (6S)-5,6,7,8-tetrahydrofolate + H(+). Attaches a formyl group to the free amino group of methionyl-tRNA(fMet). The formyl group appears to play a dual role in the initiator identity of N-formylmethionyl-tRNA by promoting its recognition by IF2 and preventing the misappropriation of this tRNA by the elongation apparatus. This is Methionyl-tRNA formyltransferase from Desulfovibrio desulfuricans (strain ATCC 27774 / DSM 6949 / MB).